The following is a 260-amino-acid chain: MPNLLEKTRKITSILQRSVDSLETELPYNTMASRLADIIDCNACIINGGGTLLGYAMKYKTNTDRVEEFFEAKQFPDTYVKAASRVYDTEANLSVENELTIFPVESKDTYPGGLTTIAPIYGGGMRLGSLIIWRNDNEFSDDDLILVEISSTVVGIQLLNLQTENLEDTIRKQTAVNMAINTLSYSEMKAVAAILGELDGNEGRLTASVIADRIGITRSVIVNALRKLESAGIIESRSLGMKGTYLKVINEGIFAKLKEF.

Positions 1–159 (MPNLLEKTRK…SSTVVGIQLL (159 aa)) are GAF domain. Positions 207-226 (ASVIADRIGITRSVIVNALR) form a DNA-binding region, H-T-H motif.

This sequence belongs to the CodY family.

It is found in the cytoplasm. Functionally, DNA-binding global transcriptional regulator which is involved in the adaptive response to starvation and acts by directly or indirectly controlling the expression of numerous genes in response to nutrient availability. During rapid exponential growth, CodY is highly active and represses genes whose products allow adaptation to nutrient depletion. The polypeptide is Global transcriptional regulator CodY (Streptococcus pyogenes serotype M1).